The primary structure comprises 286 residues: Pantothenate synthetase (286 aa).

30–37 (MGYFHEGH) serves as a coordination point for ATP. Catalysis depends on histidine 37, which acts as the Proton donor. (R)-pantoate is bound at residue glutamine 61. Glutamine 61 serves as a coordination point for beta-alanine. Position 147-150 (147-150 (GKKD)) interacts with ATP. Position 153 (glutamine 153) interacts with (R)-pantoate. Residue 184–187 (MSSR) participates in ATP binding.

It belongs to the pantothenate synthetase family. In terms of assembly, homodimer.

The protein resides in the cytoplasm. The enzyme catalyses (R)-pantoate + beta-alanine + ATP = (R)-pantothenate + AMP + diphosphate + H(+). The protein operates within cofactor biosynthesis; (R)-pantothenate biosynthesis; (R)-pantothenate from (R)-pantoate and beta-alanine: step 1/1. In terms of biological role, catalyzes the condensation of pantoate with beta-alanine in an ATP-dependent reaction via a pantoyl-adenylate intermediate. The chain is Pantothenate synthetase from Syntrophus aciditrophicus (strain SB).